The primary structure comprises 305 residues: Ornithine carbamoyltransferase (305 aa).

Carbamoyl phosphate contacts are provided by residues 47 to 50 (STRT), R98, and 125 to 128 (HPCQ). L-ornithine is bound by residues N156, D221, and 225 to 226 (SM). Residues 262-263 (CL) and R290 each bind carbamoyl phosphate.

This sequence belongs to the aspartate/ornithine carbamoyltransferase superfamily. OTCase family.

It is found in the cytoplasm. The enzyme catalyses carbamoyl phosphate + L-ornithine = L-citrulline + phosphate + H(+). The protein operates within amino-acid biosynthesis; L-arginine biosynthesis; L-arginine from L-ornithine and carbamoyl phosphate: step 1/3. Its function is as follows. Reversibly catalyzes the transfer of the carbamoyl group from carbamoyl phosphate (CP) to the N(epsilon) atom of ornithine (ORN) to produce L-citrulline. The sequence is that of Ornithine carbamoyltransferase from Methanococcus vannielii (strain ATCC 35089 / DSM 1224 / JCM 13029 / OCM 148 / SB).